Here is a 558-residue protein sequence, read N- to C-terminus: Laccase-10 (558 aa).

The signal sequence occupies residues 1-22 (MVFPIRILVLFALLAFPACVHG). Plastocyanin-like domains lie at 30 to 146 (NVVT…PKLG) and 157 to 308 (EEVI…YSGT). N-linked (GlcNAc...) asparagine glycosylation is present at Asn76. His80 and His82 together coordinate Cu cation. An N-linked (GlcNAc...) asparagine glycan is attached at Asn112. Cu cation contacts are provided by His125 and His127. 7 N-linked (GlcNAc...) asparagine glycosylation sites follow: Asn185, Asn296, Asn323, Asn373, Asn383, Asn400, and Asn441. A Plastocyanin-like 3 domain is found at 408–542 (DFPAKPRRVF…KMAFLVENGK (135 aa)). Cu cation contacts are provided by His459, His462, His464, His521, Cys522, His523, and His527. Asn545 is a glycosylation site (N-linked (GlcNAc...) asparagine).

Belongs to the multicopper oxidase family. Requires Cu cation as cofactor. Ubiquitous, with lower levels in siliques.

The protein resides in the secreted. It localises to the extracellular space. The protein localises to the apoplast. The enzyme catalyses 4 hydroquinone + O2 = 4 benzosemiquinone + 2 H2O. Its function is as follows. Lignin degradation and detoxification of lignin-derived products. The sequence is that of Laccase-10 (LAC10) from Arabidopsis thaliana (Mouse-ear cress).